The following is a 154-amino-acid chain: MKCPFCGHSNTQVLDTRMSEDGDAVRRRRRCEACDRRFTTYERIELFFPAIVKKNGSRVDYSRAKLKDSMRLALRKRPVSAEAIDEAITRIEEKLLALGQKEIPSSQVGELVMRELRKLDKIAYIRFASVYRSFEDVAEFSDVLAEVTSGNSKR.

A zinc finger spans residues 3-34 (CPFCGHSNTQVLDTRMSEDGDAVRRRRRCEAC). An ATP-cone domain is found at 49–139 (PAIVKKNGSR…VYRSFEDVAE (91 aa)).

This sequence belongs to the NrdR family. The cofactor is Zn(2+).

Negatively regulates transcription of bacterial ribonucleotide reductase nrd genes and operons by binding to NrdR-boxes. The polypeptide is Transcriptional repressor NrdR (Cupriavidus pinatubonensis (strain JMP 134 / LMG 1197) (Cupriavidus necator (strain JMP 134))).